A 274-amino-acid polypeptide reads, in one-letter code: Type II restriction enzyme HgiBI (274 aa).

The protein belongs to the TdeIII type II restriction endonuclease family.

The enzyme catalyses Endonucleolytic cleavage of DNA to give specific double-stranded fragments with terminal 5'-phosphates.. A P subtype restriction enzyme that recognizes the double-stranded sequence 5'-GGWCC-3' and cleaves after G-1. This system is less active than isoschizomeric RM.HgiEI. The polypeptide is Type II restriction enzyme HgiBI (Herpetosiphon aurantiacus (Herpetosiphon giganteus)).